A 747-amino-acid polypeptide reads, in one-letter code: Superkiller protein 7 (747 aa).

The interval 14 to 51 (KSKGLLSADQSHSTSKSASLLERLHKNRETKDNNAETK) is disordered. Over residues 21–31 (ADQSHSTSKSA) the composition is skewed to polar residues. Residues 35-51 (ERLHKNRETKDNNAETK) show a composition bias toward basic and acidic residues. A phosphoserine mark is found at serine 88 and serine 90. A disordered region spans residues 89–117 (NSDLEKQGKSVTLDSKENELPTKRKSPDD). A tr-type G domain is found at 265 to 503 (PLNLTCLFLG…YVPEWYEGPT (239 aa)). The interval 274-281 (GDTNAGKS) is G1. GTP is bound at residue 274 to 281 (GDTNAGKS). The tract at residues 331–335 (GFSMF) is G2. Residues 356-359 (DTPG) are G3. Residues 356 to 360 (DTPGS) and 427 to 430 (NKAD) each bind GTP. The tract at residues 427-430 (NKAD) is G4. The interval 467-469 (SGL) is G5.

It belongs to the TRAFAC class translation factor GTPase superfamily. Classic translation factor GTPase family. As to quaternary structure, interacts with the exosome and with the SKI complex composed of at least SKI2, SKI3 and SKI8. Interacts directly with SKI3 and SKI8.

Its subcellular location is the cytoplasm. In terms of biological role, represses the expression of non-poly(A) mRNAs like L-A or M viruses and is therefore involved in antiviral system. Mediates interactions via its N-terminus between the exosome and the SKI complex which operate in the 3'-to-5' mRNA-decay pathway. By interacting with NAM7, is also required for nonsense-mediated 3'-to-5' mRNA-decay (NMD). May recognize a stalled 80S ribosome at the 3'-end of a nonstop mRNA which leads to the recruitment of the exosome and SKI complexes to the mRNAs to be degraded. This chain is Superkiller protein 7 (SKI7), found in Saccharomyces cerevisiae (strain ATCC 204508 / S288c) (Baker's yeast).